The following is a 352-amino-acid chain: 4-hydroxy-3-methylbut-2-en-1-yl diphosphate synthase (flavodoxin) (352 aa).

Cys-263, Cys-266, Cys-298, and Glu-305 together coordinate [4Fe-4S] cluster.

Belongs to the IspG family. [4Fe-4S] cluster serves as cofactor.

The catalysed reaction is (2E)-4-hydroxy-3-methylbut-2-enyl diphosphate + oxidized [flavodoxin] + H2O + 2 H(+) = 2-C-methyl-D-erythritol 2,4-cyclic diphosphate + reduced [flavodoxin]. It participates in isoprenoid biosynthesis; isopentenyl diphosphate biosynthesis via DXP pathway; isopentenyl diphosphate from 1-deoxy-D-xylulose 5-phosphate: step 5/6. In terms of biological role, converts 2C-methyl-D-erythritol 2,4-cyclodiphosphate (ME-2,4cPP) into 1-hydroxy-2-methyl-2-(E)-butenyl 4-diphosphate. This Sulfurimonas denitrificans (strain ATCC 33889 / DSM 1251) (Thiomicrospira denitrificans (strain ATCC 33889 / DSM 1251)) protein is 4-hydroxy-3-methylbut-2-en-1-yl diphosphate synthase (flavodoxin).